We begin with the raw amino-acid sequence, 76 residues long: 8.4 kDa cro protein (76 aa).

The chain is 8.4 kDa cro protein (cro-HTT) from Escherichia coli (Bacteriophage HK022).